The following is a 189-amino-acid chain: Density-regulated protein homolog (189 aa).

The SUI1 domain occupies 105–172 (ICVSRAARGK…DLFDVIPEKW (68 aa)).

Belongs to the DENR family. As to quaternary structure, interacts with MCTS1.

Its function is as follows. Regulates translation as part of a complex with MCTS1. Specifically required for translational re-initiation in mRNAs containing upstream open reading frames (uORFs). Not required for standard translational initiation. Regulates expression of a subset of gene products including mbc, InR and EcR. This Drosophila melanogaster (Fruit fly) protein is Density-regulated protein homolog.